Consider the following 190-residue polypeptide: Probable nicotinate-nucleotide adenylyltransferase (190 aa).

Belongs to the NadD family.

It carries out the reaction nicotinate beta-D-ribonucleotide + ATP + H(+) = deamido-NAD(+) + diphosphate. The protein operates within cofactor biosynthesis; NAD(+) biosynthesis; deamido-NAD(+) from nicotinate D-ribonucleotide: step 1/1. In terms of biological role, catalyzes the reversible adenylation of nicotinate mononucleotide (NaMN) to nicotinic acid adenine dinucleotide (NaAD). This chain is Probable nicotinate-nucleotide adenylyltransferase, found in Borrelia hermsii (strain HS1 / DAH).